The following is a 744-amino-acid chain: Cell surface receptor daf-4 (744 aa).

The N-terminal stretch at 1–31 (MNQKGTVRLKALVLICLPLFLIATPVPVAVT) is a signal peptide. The Extracellular portion of the chain corresponds to 48–253 (WANTLVSKVA…IALLILAYVG (206 aa)). N-linked (GlcNAc...) asparagine glycans are attached at residues asparagine 60, asparagine 134, and asparagine 165. Residues 254–274 (WKFQQNKKEEIKKQQKIKFDM) form a helical membrane-spanning segment. Residues 275 to 744 (EKTDALEAGN…PSGTFGTFTT (470 aa)) are Cytoplasmic-facing. The Protein kinase domain maps to 306–603 (ITDFQLISKG…FARVWNHIMS (298 aa)). Residues 312 to 320 (ISKGRFGKV) and lysine 338 each bind ATP. The Proton acceptor role is filled by aspartate 440. Disordered stretches follow at residues 605 to 686 (PDSS…PEPE) and 724 to 744 (AGADTRASTPTPSGTFGTFTT). The span at 620–639 (RGVDDVEQSEKPEGIEEMQH) shows a compositional bias: basic and acidic residues. The span at 731–744 (STPTPSGTFGTFTT) shows a compositional bias: low complexity.

This sequence belongs to the protein kinase superfamily. TKL Ser/Thr protein kinase family. TGFB receptor subfamily. As to quaternary structure, may interact with daf-1 to regulate dauer larva development. Interacts with sma-10. In terms of tissue distribution, pharynx, intestine, hypodermis and body wall muscles in L1 through to adult stages. Also expressed in head neurons, ventral cord and tail neurons. Subset of head neurons show coexpression with daf-1 when dauer/nondauer decision is made.

It is found in the cell membrane. The catalysed reaction is L-threonyl-[receptor-protein] + ATP = O-phospho-L-threonyl-[receptor-protein] + ADP + H(+). It carries out the reaction L-seryl-[receptor-protein] + ATP = O-phospho-L-seryl-[receptor-protein] + ADP + H(+). In terms of biological role, involved in a TGF-beta pathway. May be a receptor for TGF-beta-like ligand daf-7. Controls the decision of whether or not larvae enter a developmentally arrested state, known as dauer, in response to environmental conditions. Regulates body size and male tail patterning. Involved in regulating entry into quiescence triggered by satiety. Involved in sensitivity to CO2 levels. This Caenorhabditis elegans protein is Cell surface receptor daf-4.